The chain runs to 64 residues: DNA-binding protein 7 (64 aa).

N6-methyllysine is present on residues lysine 5 and lysine 7.

The protein belongs to the 7 kDa DNA-binding/endoribonuclease P2 family. Monomer.

It localises to the cytoplasm. Can constrain negative DNA supercoils. May be involved in maintaining the integrity of the genome at high temperature. This Sulfurisphaera tokodaii (strain DSM 16993 / JCM 10545 / NBRC 100140 / 7) (Sulfolobus tokodaii) protein is DNA-binding protein 7.